The sequence spans 337 residues: S-adenosylmethionine:tRNA ribosyltransferase-isomerase (337 aa).

The protein belongs to the QueA family. As to quaternary structure, monomer.

The protein resides in the cytoplasm. It carries out the reaction 7-aminomethyl-7-carbaguanosine(34) in tRNA + S-adenosyl-L-methionine = epoxyqueuosine(34) in tRNA + adenine + L-methionine + 2 H(+). It participates in tRNA modification; tRNA-queuosine biosynthesis. Functionally, transfers and isomerizes the ribose moiety from AdoMet to the 7-aminomethyl group of 7-deazaguanine (preQ1-tRNA) to give epoxyqueuosine (oQ-tRNA). This Legionella pneumophila (strain Paris) protein is S-adenosylmethionine:tRNA ribosyltransferase-isomerase.